Here is an 811-residue protein sequence, read N- to C-terminus: Potassium transporter 27 (811 aa).

Topologically, residues 1-64 are cytoplasmic; sequence MGDDVLGRGS…QEESWARTLK (64 aa). A helical transmembrane segment spans residues 65 to 85; sequence LAFQCVGILYGDIGTSPLFVY. Over 86 to 102 the chain is Extracellular; that stretch reads SSTFKDGVRHPDDLLGA. Residues 103–123 traverse the membrane as a helical segment; sequence LSLIIYSFALFTIVKYVFIAL. Topologically, residues 124–188 are cytoplasmic; sequence RANDDGDGGT…ELLETNRAVK (65 aa). Residues 189 to 209 traverse the membrane as a helical segment; it reads IWLFLLTILATAMVISDAVLT. The Extracellular portion of the chain corresponds to 210-226; sequence PAISVLSAVGGLKEKAP. The chain crosses the membrane as a helical span at residues 227-247; sequence NLTTDEIVWITVATLVVLFAI. Topologically, residues 248–254 are cytoplasmic; it reads QRFGTDK. The helical transmembrane segment at 255-275 threads the bilayer; that stretch reads IGYLFAPIILLWLLLIGCVGI. Residues 276 to 310 are Extracellular-facing; the sequence is YNTIKFDTGVLRAFNLKYIIDYFRRNKKDGWISLS. Residues 311–331 traverse the membrane as a helical segment; sequence GILLCFTGTEALFSDLGYFSI. The Cytoplasmic portion of the chain corresponds to 332 to 335; the sequence is RSIQ. The chain crosses the membrane as a helical span at residues 336–356; the sequence is LSFSFGLVPSVLLAYIGQAAY. Residues 357–375 are Extracellular-facing; the sequence is LREHPEHIANTFYRSTPNV. Residues 376–396 traverse the membrane as a helical segment; the sequence is MFWPTFILAVAASIIGSQAMI. Topologically, residues 397–434 are cytoplasmic; that stretch reads SCAFATISHLQTLNCFPRVKILHTSRQYSGQLYIPEVN. The helical transmembrane segment at 435-455 threads the bilayer; that stretch reads FLLCVGACLVTIGFKTTVIIG. Topologically, residues 456–459 are extracellular; that stretch reads EAHA. Residues 460-480 form a helical membrane-spanning segment; it reads ICVVFVMIITTLLLTIVMLLV. Over 481-482 the chain is Cytoplasmic; sequence WK. A helical membrane pass occupies residues 483 to 503; it reads VSIWYVALFFIVFMSSESIYL. Over 504–515 the chain is Extracellular; the sequence is SAVLYQFVHGEY. The helical transmembrane segment at 516-536 threads the bilayer; it reads VPVAMSVFLMIVMTVWHYVHV. The Cytoplasmic segment spans residues 537–811; sequence KRYEFELEHT…VLKVGIAYEI (275 aa).

This sequence belongs to the HAK/KUP transporter (TC 2.A.72.3) family.

The protein resides in the membrane. High-affinity potassium transporter. This is Potassium transporter 27 (HAK27) from Oryza sativa subsp. japonica (Rice).